The chain runs to 124 residues: MASTARSLRYALAILTTSLVTPSVWAHAHLTHQYPAANAQVTAAPQAITLNFSEGVETGFSGAKITGPKNENIKTLPAKRNEQDQKQLIVPLADSLKPGTYTVDWHVVSVDGHKTKGHYTFSVK.

An N-terminal signal peptide occupies residues 1 to 26 (MASTARSLRYALAILTTSLVTPSVWA). Positions 27 and 113 each coordinate Cu cation.

Belongs to the CopC family.

The protein localises to the periplasm. This Escherichia coli O6:H1 (strain CFT073 / ATCC 700928 / UPEC) protein is Protein YobA (yobA).